Reading from the N-terminus, the 111-residue chain is MNSKTPSTDIAALKDLLRYKVTVARHGFLFDDGKIVWSEDGDEAWNRLLVVVGALRSSNRMSQALFMDMSITKGDGYLLFSDLQGTNNLQYRTPKFRQYLFPVDEFLPLPR.

Belongs to the novirhabdovirus NV protein family.

In terms of biological role, plays an essential role for the viral pathogenicity. The chain is Non-virion protein (NV) from Acanthopagrus schlegelii (Black porgy).